Here is a 711-residue protein sequence, read N- to C-terminus: Polyribonucleotide nucleotidyltransferase (711 aa).

2 residues coordinate Mg(2+): D486 and D492. A KH domain is found at 553–612; the sequence is PRIHTIKINPDKIKDVIGKGGSVIRALTEETGTTIEIEDDGTVKIAATDGEKAKHAIRRI. Residues 622 to 690 enclose the S1 motif domain; sequence GRVYNGKVTR…RQGRIRLSIK (69 aa). Positions 689–711 are disordered; that stretch reads IKEATEQSQPAAAPEAPAAEQGE. The segment covering 694 to 711 has biased composition (low complexity); sequence EQSQPAAAPEAPAAEQGE.

The protein belongs to the polyribonucleotide nucleotidyltransferase family. As to quaternary structure, component of the RNA degradosome, which is a multiprotein complex involved in RNA processing and mRNA degradation. Mg(2+) is required as a cofactor.

The protein localises to the cytoplasm. It carries out the reaction RNA(n+1) + phosphate = RNA(n) + a ribonucleoside 5'-diphosphate. In terms of biological role, involved in mRNA degradation. Catalyzes the phosphorolysis of single-stranded polyribonucleotides processively in the 3'- to 5'-direction. The protein is Polyribonucleotide nucleotidyltransferase of Escherichia coli O6:K15:H31 (strain 536 / UPEC).